We begin with the raw amino-acid sequence, 248 residues long: Mannose-binding protein C (248 aa).

Positions Met1 to Ser20 are cleaved as a signal peptide. The disordered stretch occupies residues Ile36 to Arg112. A Collagen-like domain is found at Gly42–Ala99. A 4-hydroxyproline modification is found at Pro47. Over residues Lys49 to Glu61 the composition is skewed to basic and acidic residues. Residues Pro73, Pro79, Pro82, and Pro88 each carry the 4-hydroxyproline modification. Residues Arg112–Leu130 are a coiled coil. The C-type lectin domain maps to Val134–Glu245. 2 disulfides stabilise this stretch: Cys155–Cys244 and Cys222–Cys236.

In terms of assembly, oligomeric complex of 3 or more homotrimers. Interacts with MASP1 and MASP2. Interacts with MEP1A and MEP1B and may inhibit their catalytic activity. Hydroxylation on proline residues within the sequence motif, GXPG, is most likely to be 4-hydroxy as this fits the requirement for 4-hydroxylation in vertebrates.

The protein resides in the secreted. In terms of biological role, calcium-dependent lectin involved in innate immune defense. Binds mannose, fucose and N-acetylglucosamine on different microorganisms and activates the lectin complement pathway. Binds to late apoptotic cells, as well as to apoptotic blebs and to necrotic cells, but not to early apoptotic cells, facilitating their uptake by macrophages. This Saguinus oedipus (Cotton-top tamarin) protein is Mannose-binding protein C (MBL2).